Consider the following 696-residue polypeptide: uncharacterized protein (696 aa).

10 consecutive transmembrane segments (helical) span residues 38–58 (IISIISGIFIGLTAALLNALA), 107–127 (LIYVSVSVGFAFIATTLGYVV), 215–235 (AMASGIAASFNAPVGGVIFAL), 245–265 (SLFTGSIWYEFLCSASSVVAL), 292–312 (TLPFIFISILCGCLGSVLIYL), 329–349 (VFFVIFLSLITSLTAYAILGE), 380–400 (FWVTAIVLFTSALLGLLLTSA), 402–422 (FGAAIPTGIIVPSLAIGACIG), 433–453 (FPSLAGTSIYGVIGSIAFLSS), and 457–477 (LVVALVVILFELTGALNIALP). 2 CBS domains span residues 527–587 (RSPE…PMSS) and 617–674 (IHPT…THTG).

This sequence belongs to the chloride channel (TC 2.A.49) family.

It is found in the membrane. Functionally, voltage-gated chloride channel. This is an uncharacterized protein from Schizosaccharomyces pombe (strain 972 / ATCC 24843) (Fission yeast).